The following is a 674-amino-acid chain: Methionine--tRNA ligase (674 aa).

Residues 11–21 (PYANGDLHLGH) carry the 'HIGH' region motif. Residues Cys-142, Cys-145, Cys-155, and Cys-158 each contribute to the Zn(2+) site. A 'KMSKS' region motif is present at residues 330 to 334 (KMSKS). An ATP-binding site is contributed by Lys-333. The tRNA-binding domain occupies 574–674 (DFMKVDLRIA…EGAQPGMRVK (101 aa)).

The protein belongs to the class-I aminoacyl-tRNA synthetase family. MetG type 1 subfamily. As to quaternary structure, homodimer. It depends on Zn(2+) as a cofactor.

It localises to the cytoplasm. The catalysed reaction is tRNA(Met) + L-methionine + ATP = L-methionyl-tRNA(Met) + AMP + diphosphate. Is required not only for elongation of protein synthesis but also for the initiation of all mRNA translation through initiator tRNA(fMet) aminoacylation. The protein is Methionine--tRNA ligase of Francisella tularensis subsp. holarctica (strain FTNF002-00 / FTA).